The following is a 435-amino-acid chain: 3-ketoacyl-CoA thiolase (435 aa).

The active-site Acyl-thioester intermediate is the C98. Active-site proton acceptor residues include H391 and C421.

This sequence belongs to the thiolase-like superfamily. Thiolase family. Heterotetramer of two alpha chains (FadJ) and two beta chains (FadI).

The protein localises to the cytoplasm. The enzyme catalyses an acyl-CoA + acetyl-CoA = a 3-oxoacyl-CoA + CoA. The protein operates within lipid metabolism; fatty acid beta-oxidation. Functionally, catalyzes the final step of fatty acid oxidation in which acetyl-CoA is released and the CoA ester of a fatty acid two carbons shorter is formed. The polypeptide is 3-ketoacyl-CoA thiolase (Vibrio vulnificus (strain CMCP6)).